The primary structure comprises 226 residues: Ribose-5-phosphate isomerase A (226 aa).

Substrate-binding positions include 25 to 28 (TGST), 81 to 84 (DGAD), and 94 to 97 (KGGG). Glu103 functions as the Proton acceptor in the catalytic mechanism. Substrate is bound at residue Lys121.

This sequence belongs to the ribose 5-phosphate isomerase family. Homodimer.

It carries out the reaction aldehydo-D-ribose 5-phosphate = D-ribulose 5-phosphate. Its pathway is carbohydrate degradation; pentose phosphate pathway; D-ribose 5-phosphate from D-ribulose 5-phosphate (non-oxidative stage): step 1/1. Its function is as follows. Catalyzes the reversible conversion of ribose-5-phosphate to ribulose 5-phosphate. The protein is Ribose-5-phosphate isomerase A of Enterococcus faecalis (strain ATCC 700802 / V583).